We begin with the raw amino-acid sequence, 411 residues long: Lissencephaly-1 homolog (411 aa).

One can recognise a LisH domain in the interval 9 to 41 (QREELNQAIADYLGSNGYADSLEAFRKEADLST). A coiled-coil region spans residues 56-83 (TSVIRLQKKVMELEAKLTEAEKEVIEGA). WD repeat units follow at residues 106–147 (GHRA…RSLK), 148–187 (GHTD…ECVK), 191–230 (GHDH…CVKT), 233–272 (GHRE…CKVE), 275–334 (DHEH…CLFT), 337–376 (GHDN…CMKT), and 379–411 (AHQH…WECR).

The protein belongs to the WD repeat LIS1/nudF family.

Its subcellular location is the cytoplasm. The protein localises to the cytoskeleton. The protein resides in the microtubule organizing center. It is found in the centrosome. Functionally, positively regulates the activity of the minus-end directed microtubule motor protein dynein. May enhance dynein-mediated microtubule sliding by targeting dynein to the microtubule plus end. Required for several dynein- and microtubule-dependent processes. This Drosophila ananassae (Fruit fly) protein is Lissencephaly-1 homolog.